Reading from the N-terminus, the 97-residue chain is Large ribosomal subunit protein uL23 (97 aa).

Belongs to the universal ribosomal protein uL23 family. In terms of assembly, part of the 50S ribosomal subunit. Contacts protein L29, and trigger factor when it is bound to the ribosome.

Functionally, one of the early assembly proteins it binds 23S rRNA. One of the proteins that surrounds the polypeptide exit tunnel on the outside of the ribosome. Forms the main docking site for trigger factor binding to the ribosome. The chain is Large ribosomal subunit protein uL23 from Mesorhizobium japonicum (strain LMG 29417 / CECT 9101 / MAFF 303099) (Mesorhizobium loti (strain MAFF 303099)).